Reading from the N-terminus, the 262-residue chain is Indole-3-glycerol phosphate synthase (262 aa).

It belongs to the TrpC family.

It catalyses the reaction 1-(2-carboxyphenylamino)-1-deoxy-D-ribulose 5-phosphate + H(+) = (1S,2R)-1-C-(indol-3-yl)glycerol 3-phosphate + CO2 + H2O. It functions in the pathway amino-acid biosynthesis; L-tryptophan biosynthesis; L-tryptophan from chorismate: step 4/5. This is Indole-3-glycerol phosphate synthase from Thiobacillus denitrificans (strain ATCC 25259 / T1).